The primary structure comprises 205 residues: Transmembrane emp24 domain-containing protein A (205 aa).

A signal peptide spans 1–24 (MMNNKLLLLVIALLCIASNSIVES). Residues 25–172 (FSFKVSAKVE…RNTAESTNSR (148 aa)) are Lumenal-facing. Residues 34-116 (EECIYEEIGV…DKTVSFILSV (83 aa)) enclose the GOLD domain. Residues 173–193 (VLWWSVFEAFVLIALSIWQIY) traverse the membrane as a helical segment. The Cytoplasmic segment spans residues 194–205 (YLRRFFEVKRAV).

This sequence belongs to the EMP24/GP25L family.

The protein resides in the cytoplasmic vesicle membrane. In terms of biological role, could have a role in the budding of coatomer-coated and other species of coated vesicles. This Dictyostelium discoideum (Social amoeba) protein is Transmembrane emp24 domain-containing protein A (empA).